The primary structure comprises 144 residues: Leghemoglobin 3 (144 aa).

At valine 2 the chain carries N-acetylvaline. Residues 3–144 form the Globin domain; the sequence is AFTEKQDALV…DELAAAIKKA (142 aa). Residues tyrosine 26 and tyrosine 31 each carry the nitrated tyrosine modification. Serine 46 contributes to the heme b binding site. The residue at position 46 (serine 46) is a Phosphoserine. Histidine 62 serves as a coordination point for O2. Heme b-binding residues include lysine 65, histidine 93, and lysine 96. Tyrosine 134 is subject to Nitrated tyrosine.

Belongs to the plant globin family. As to quaternary structure, monomer. In terms of processing, nitrated mainly at Tyr-31 and, to a lower extent, at Tyr-26 and Tyr-134, in effective nodules and particularly in hypoxic conditions; this mechanism may play a protective role in the symbiosis by buffering toxic peroxynitrite NO(2)(-). Nitration level decrease during nodule senescence. Post-translationally, phosphorylation at Ser-46 disrupts the molecular environment of its porphyrin ring oxygen binding pocket, thus leading to a reduced oxygen consumption and to the delivery of oxygen O(2) to symbiosomes. In terms of tissue distribution, specifically expressed in root nodules.

It is found in the cytoplasm. The protein localises to the cytosol. It localises to the nucleus. Its function is as follows. Leghemoglobin that reversibly binds oxygen O(2) through a pentacoordinated heme iron. In root nodules, facilitates the diffusion of oxygen to the bacteroids while preventing the bacterial nitrogenase from being inactivated by buffering dioxygen, nitric oxide and carbon monoxide, and promoting the formation of reactive oxygen species (ROS, e.g. H(2)O(2)). This role is essential for symbiotic nitrogen fixation (SNF). The protein is Leghemoglobin 3 of Glycine max (Soybean).